The following is a 376-amino-acid chain: uncharacterized protein (376 aa).

Residues 24 to 44 (YLSIISIISVFLLNSSIVYSC) traverse the membrane as a helical segment. H251 lines the Zn(2+) pocket.

This sequence belongs to the peptidase M23B family. It depends on Zn(2+) as a cofactor.

The protein localises to the cell membrane. This is an uncharacterized protein from Buchnera aphidicola subsp. Baizongia pistaciae (strain Bp).